The following is a 209-amino-acid chain: MSRVVVIDHPLIQHKLSIIRDKDTGPKEFRELVNEIAMLMAYEVTRDLPTEEVEVDTPIARARCRRLAGEKLGLIPILRAGLGMVQGILSLYPTARVGHIGLYRDPDTLKPVEYYCKLPTDLGERELLVLDPMLATGGSVVASLDLIKRQGGRRIKLLCLIAAPEGVQAVQEAHPDVDIYLAALDEMLNEHAYIVPGLGDAGDRLFGTK.

Residues Arg79, Arg104, and 131–139 (DPMLATGGS) each bind 5-phospho-alpha-D-ribose 1-diphosphate. Uracil is bound by residues Ile194 and 199-201 (GDA). A 5-phospho-alpha-D-ribose 1-diphosphate-binding site is contributed by Asp200.

Belongs to the UPRTase family. It depends on Mg(2+) as a cofactor.

The catalysed reaction is UMP + diphosphate = 5-phospho-alpha-D-ribose 1-diphosphate + uracil. Its pathway is pyrimidine metabolism; UMP biosynthesis via salvage pathway; UMP from uracil: step 1/1. Its activity is regulated as follows. Allosterically activated by GTP. In terms of biological role, catalyzes the conversion of uracil and 5-phospho-alpha-D-ribose 1-diphosphate (PRPP) to UMP and diphosphate. In Symbiobacterium thermophilum (strain DSM 24528 / JCM 14929 / IAM 14863 / T), this protein is Uracil phosphoribosyltransferase.